Reading from the N-terminus, the 270-residue chain is Cell division protein DivIB (270 aa).

Residues 1-38 (MTRRNNPELNDEREPIDKIKASIDLKKKTIRRNKRKRR) lie on the Cytoplasmic side of the membrane. Residues 39–59 (LIKMLQFLIVIGVLIGIYYFD) traverse the membrane as a helical segment. Over 60-270 (KSDASRVHNV…QSAVVKACGS (211 aa)) the chain is Extracellular. The POTRA domain maps to 64–135 (SRVHNVRVNG…INLNVTEKKA (72 aa)).

It belongs to the FtsQ/DivIB family. DivIB subfamily.

It is found in the cell membrane. Functionally, cell division protein that may be involved in stabilizing or promoting the assembly of the division complex. This chain is Cell division protein DivIB, found in Erysipelothrix rhusiopathiae (strain Fujisawa).